The primary structure comprises 252 residues: DNA-directed RNA polymerase III subunit rpc8 (252 aa).

Residues 214–252 (WTNQSAGDDDENEEDGGENQDDEVAEDDGGEEPTIEEDE) form a disordered region. Residues 220–252 (GDDDENEEDGGENQDDEVAEDDGGEEPTIEEDE) are compositionally biased toward acidic residues.

It belongs to the eukaryotic RPB7/RPC8 RNA polymerase subunit family. As to quaternary structure, component of the RNA polymerase III (Pol III) complex consisting of several subunits.

It localises to the nucleus. Functionally, DNA-dependent RNA polymerase catalyzes the transcription of DNA into RNA using the four ribonucleoside triphosphates as substrates. The sequence is that of DNA-directed RNA polymerase III subunit rpc8 (polr3h-1) from Dictyostelium discoideum (Social amoeba).